The following is a 597-amino-acid chain: Sulfite reductase [NADPH] flavoprotein alpha-component (597 aa).

Positions 62 to 200 (VTVLSASQTG…TADKWIQDVV (139 aa)) constitute a Flavodoxin-like domain. FMN contacts are provided by residues 68–73 (SQTGNA), 115–118 (STQG), and 151–160 (LGDTSYPNFC). Residues 232–446 (ENPYTAKLIT…VEPNDNFRLP (215 aa)) form the FAD-binding FR-type domain. Residues Thr-320, Asn-354, 384–387 (RLYS), 402–404 (SVG), and 417–420 (GVAS) each bind FAD. NADP(+) is bound by residues 517–518 (SR), 523–527 (KIYVQ), and Asp-559. Tyr-597 lines the FAD pocket.

Belongs to the NADPH-dependent sulphite reductase flavoprotein subunit CysJ family. It in the N-terminal section; belongs to the flavodoxin family. This sequence in the C-terminal section; belongs to the flavoprotein pyridine nucleotide cytochrome reductase family. As to quaternary structure, alpha(8)-beta(8). The alpha component is a flavoprotein, the beta component is a hemoprotein. Requires FAD as cofactor. It depends on FMN as a cofactor.

The catalysed reaction is hydrogen sulfide + 3 NADP(+) + 3 H2O = sulfite + 3 NADPH + 4 H(+). It participates in sulfur metabolism; hydrogen sulfide biosynthesis; hydrogen sulfide from sulfite (NADPH route): step 1/1. Component of the sulfite reductase complex that catalyzes the 6-electron reduction of sulfite to sulfide. This is one of several activities required for the biosynthesis of L-cysteine from sulfate. The flavoprotein component catalyzes the electron flow from NADPH -&gt; FAD -&gt; FMN to the hemoprotein component. This chain is Sulfite reductase [NADPH] flavoprotein alpha-component, found in Mannheimia succiniciproducens (strain KCTC 0769BP / MBEL55E).